A 610-amino-acid polypeptide reads, in one-letter code: Replication factor C large subunit (610 aa).

55–62 (GPAGIGKT) serves as a coordination point for ATP. Composition is skewed to basic and acidic residues over residues 467 to 478 (EKEGNASAEKPE), 502 to 515 (LPEKKRSSEMKLPE), and 594 to 603 (DGSKKAEPKN). Residues 467–610 (EKEGNASAEK…PKNQKTLFDF (144 aa)) are disordered.

It belongs to the activator 1 small subunits family. RfcL subfamily. Heteromultimer composed of small subunits (RfcS) and large subunits (RfcL).

In terms of biological role, part of the RFC clamp loader complex which loads the PCNA sliding clamp onto DNA. The chain is Replication factor C large subunit from Methanosarcina mazei (strain ATCC BAA-159 / DSM 3647 / Goe1 / Go1 / JCM 11833 / OCM 88) (Methanosarcina frisia).